A 458-amino-acid polypeptide reads, in one-letter code: Glutamate--tRNA ligase 2 (458 aa).

The 'HIGH' region motif lies at 20–30 (PSPTGLIHVGN). The short motif at 251-255 (GLSKR) is the 'KMSKS' region element. K254 serves as a coordination point for ATP.

It belongs to the class-I aminoacyl-tRNA synthetase family. Glutamate--tRNA ligase type 1 subfamily. Monomer.

It localises to the cytoplasm. The catalysed reaction is tRNA(Glu) + L-glutamate + ATP = L-glutamyl-tRNA(Glu) + AMP + diphosphate. Catalyzes the attachment of glutamate to tRNA(Glu) in a two-step reaction: glutamate is first activated by ATP to form Glu-AMP and then transferred to the acceptor end of tRNA(Glu). This is Glutamate--tRNA ligase 2 from Xanthobacter autotrophicus (strain ATCC BAA-1158 / Py2).